Reading from the N-terminus, the 651-residue chain is Probable potassium transport system protein Kup (651 aa).

A run of 12 helical transmembrane segments spans residues 41–61, 82–102, 130–150, 163–183, 194–214, 235–255, 276–296, 309–329, 366–386, 395–415, 426–446, and 450–470; these read LVLG…IYAF, VVSL…VLFV, LILG…VITP, IVAP…LVTL, VAIV…ASGL, FLTV…LAMT, WLWI…AFIL, MIPS…TVIA, IYIP…VLGF, AYGI…YIVM, ALPI…ANII, and EGGW…WTWV.

The protein belongs to the HAK/KUP transporter (TC 2.A.72) family.

The protein resides in the cell inner membrane. It catalyses the reaction K(+)(in) + H(+)(in) = K(+)(out) + H(+)(out). In terms of biological role, transport of potassium into the cell. Likely operates as a K(+):H(+) symporter. The chain is Probable potassium transport system protein Kup from Brucella melitensis biotype 2 (strain ATCC 23457).